The following is a 189-amino-acid chain: dCTP deaminase (189 aa).

DCTP is bound by residues 112–117, 136–138, Q157, Y171, and Q181; these read KSTYAR and TLE. E138 acts as the Proton donor/acceptor in catalysis.

The protein belongs to the dCTP deaminase family. In terms of assembly, homotrimer.

The catalysed reaction is dCTP + H2O + H(+) = dUTP + NH4(+). Its pathway is pyrimidine metabolism; dUMP biosynthesis; dUMP from dCTP (dUTP route): step 1/2. Functionally, catalyzes the deamination of dCTP to dUTP. The chain is dCTP deaminase from Xanthomonas axonopodis pv. citri (strain 306).